The sequence spans 392 residues: Quinolinate synthase (392 aa).

The interval 1–23 (MVDLPTTTPPAQPTTGNDEVDAL) is disordered. Histidine 57 and serine 74 together coordinate iminosuccinate. Cysteine 131 serves as a coordination point for [4Fe-4S] cluster. Residues 163 to 165 (YIN) and serine 184 each bind iminosuccinate. Cysteine 254 serves as a coordination point for [4Fe-4S] cluster. Iminosuccinate contacts are provided by residues 280–282 (HPE) and threonine 297. Position 344 (cysteine 344) interacts with [4Fe-4S] cluster.

The protein belongs to the quinolinate synthase family. Type 3 subfamily. [4Fe-4S] cluster serves as cofactor.

It localises to the cytoplasm. It carries out the reaction iminosuccinate + dihydroxyacetone phosphate = quinolinate + phosphate + 2 H2O + H(+). It functions in the pathway cofactor biosynthesis; NAD(+) biosynthesis; quinolinate from iminoaspartate: step 1/1. In terms of biological role, catalyzes the condensation of iminoaspartate with dihydroxyacetone phosphate to form quinolinate. This is Quinolinate synthase from Rhodopirellula baltica (strain DSM 10527 / NCIMB 13988 / SH1).